A 953-amino-acid polypeptide reads, in one-letter code: MKLPGQEDFEGSDAHENVCSEQLDGDLGPGSGLDGPSDIDNGKAQGCKDPLLFIQLNELLGWPQALEWRETGRWLLFEEKLDIGAGRWSAPHVPTLALPSLQKLRGLLAEGIVLLDCPARSLLELVEQVVRVESLSPELRGQLQALLLQRPQHHIQTTGIRPCRRSNAFRKASRDEDTLLKHQNPLRQKLPPGAEAAAVLAGELGFLEQPLAAFVRLQNPVVLEPLTEVVLPSRFFCLLLGPSTLGRSYHETGRAAAVLLSDPQFQWSVRRASNLHDLLAALDAFLQEVTALPPGRWDRTARIPPPKCLPSQHKRFPSKLQEVTSLSRQSAALAENKHHHGPHTPIPELQRTGRLFGGLVQDVRRKACWYPSDFLDALHPQCFSAVLYIYLATVTNAITFGGLLGDATEGAQGVLESFLGTAVAGATFCLMAGQPLTILSSTGPVLVFERLLFSFSRDYSLDYLPFRLWVGIWVATFCLALVATEASLLVRYFTRFTEEGFCALISLIFIYDAVGKMLNLIRAYPIQRPGSPAYSCFCQYPGTGGNASEFDSTMFKDTEDVLNVHPGLVNASFLPPSECIRQGGYPRGPSCHTVPDIAFFSLLLFFTSFLCAIALKHVKNSRLFPSVVRKVFSDFSSVLAILLGCGLDAFLGLATPKLLVPTEFKPTLPGRGWLVSPFGANPWWLSVAAALPALLLSILIFMDQQITAVILNRAEYRLQKGAGFHLDLFCVAVLMLFTSALGLPWYVSATVISLAHMDSLRRESKACVPGEDPNFLGIREQRLTGLVVFILTGVSIFLAPVLKFIPMPVLYGIFLYMGVAALSSMQFMKRVQLLLMPRKHQPDVLLLRHVPLIRVHLFTAIQLACLGLLWVIKSTPAAIVFPLMLLGLVAVRKALEWIFSPQELLWLDELMPEEEKTIPENRPEPEHLFSGNDSENSELMYQPKAPEINISVN.

A disordered region spans residues 20–41; sequence SEQLDGDLGPGSGLDGPSDIDN. Transmembrane regions (helical) follow at residues 385-405, 413-433, 470-490, and 501-521; these read AVLYIYLATVTNAITFGGLLG, GVLESFLGTAVAGATFCLMAG, VGIWVATFCLALVATEASLLV, and FCALISLIFIYDAVGKMLNLI. Positions 385–953 are membrane (anion exchange); the sequence is AVLYIYLATV…KAPEINISVN (569 aa). N-linked (GlcNAc...) asparagine glycosylation is found at N546 and N570. 7 consecutive transmembrane segments (helical) span residues 594 to 614, 635 to 655, 682 to 702, 728 to 748, 785 to 805, 807 to 827, and 869 to 889; these read VPDIAFFSLLLFFTSFLCAIA, FSSVLAILLGCGLDAFLGLAT, PWWLSVAAALPALLLSILIFM, LFCVAVLMLFTSALGLPWYVS, GLVVFILTGVSIFLAPVLKFI, MPVLYGIFLYMGVAALSSMQF, and LWVIKSTPAAIVFPLMLLGLV. Residues 916–927 show a composition bias toward basic and acidic residues; sequence KTIPENRPEPEH. The disordered stretch occupies residues 916–938; sequence KTIPENRPEPEHLFSGNDSENSE. 2 N-linked (GlcNAc...) asparagine glycosylation sites follow: N932 and N949.

The protein belongs to the anion exchanger (TC 2.A.31) family. In terms of tissue distribution, expressed in kidney and gastrointestinal tract. In kidney, it is highly expressed in the cortex, expressed at intermediate level in the outer medulla and not expressed in the inner medulla. It is expressed in the cecum, while it is absent in other segments of gastrointestinal tract. Highly expressed in the cortical collecting duct (CCD). Expressed in both alpha-intercalated cells and beta-intercalated cells in the CCD (at protein level).

It is found in the basolateral cell membrane. The catalysed reaction is 2 hydrogencarbonate(out) + chloride(in) + Na(+)(out) = 2 hydrogencarbonate(in) + chloride(out) + Na(+)(in). It catalyses the reaction K(+)(in) + 2 hydrogencarbonate(in) + chloride(out) = K(+)(out) + 2 hydrogencarbonate(out) + chloride(in). It carries out the reaction Li(+)(in) + 2 hydrogencarbonate(in) + chloride(out) = Li(+)(out) + 2 hydrogencarbonate(out) + chloride(in). The enzyme catalyses Rb(+)(in) + 2 hydrogencarbonate(in) + chloride(out) = Rb(+)(out) + 2 hydrogencarbonate(out) + chloride(in). The catalysed reaction is Cs(+)(in) + 2 hydrogencarbonate(in) + chloride(out) = Cs(+)(out) + 2 hydrogencarbonate(out) + chloride(in). 4,4'-diisothiocyanatodihydrostilbene-2,2'- disulfonic acid (H2DIDS) potently inhibits chloride/hydrogencarbonate antiporter activity with 50% inhibition at about 5 uM. Completely inhibits chloride/hydrogencarbonate antiporter activity at 200 uM of 4,4'-diisothiocyano-trans-stilbene-2,2'-disulfonic acid (DIDS). Electroneutral Cl(-)/HCO3(-) antiporter that favors chloride ion entry and efflux of hydrogencarbonate and sodium ion across the basolateral membrane and may participate in salivary secretion. Also mediates Cl(-)/HCO3(-) exchange activity in the presence of K(+) as well as Cs(+), Li(+), and Rb(+). Does not contribute to Cl(-)/HCO3(-) exchanger in the apical membrane of the upper villous epithelium. In Rattus norvegicus (Rat), this protein is Anion exchange protein 4.